The primary structure comprises 341 residues: tRNA N6-adenosine threonylcarbamoyltransferase (341 aa).

Residues His116 and His120 each coordinate Fe cation. Residues 139-143 (LVSGG), Asp172, Gly185, and Asn274 contribute to the substrate site. Residue Asp302 coordinates Fe cation.

This sequence belongs to the KAE1 / TsaD family. The cofactor is Fe(2+).

It is found in the cytoplasm. The catalysed reaction is L-threonylcarbamoyladenylate + adenosine(37) in tRNA = N(6)-L-threonylcarbamoyladenosine(37) in tRNA + AMP + H(+). Its function is as follows. Required for the formation of a threonylcarbamoyl group on adenosine at position 37 (t(6)A37) in tRNAs that read codons beginning with adenine. Is involved in the transfer of the threonylcarbamoyl moiety of threonylcarbamoyl-AMP (TC-AMP) to the N6 group of A37, together with TsaE and TsaB. TsaD likely plays a direct catalytic role in this reaction. In Vesicomyosocius okutanii subsp. Calyptogena okutanii (strain HA), this protein is tRNA N6-adenosine threonylcarbamoyltransferase.